Consider the following 289-residue polypeptide: ATP synthase gamma chain (289 aa).

The protein belongs to the ATPase gamma chain family. F-type ATPases have 2 components, CF(1) - the catalytic core - and CF(0) - the membrane proton channel. CF(1) has five subunits: alpha(3), beta(3), gamma(1), delta(1), epsilon(1). CF(0) has three main subunits: a, b and c.

Its subcellular location is the cell inner membrane. Its function is as follows. Produces ATP from ADP in the presence of a proton gradient across the membrane. The gamma chain is believed to be important in regulating ATPase activity and the flow of protons through the CF(0) complex. The chain is ATP synthase gamma chain from Pasteurella multocida (strain Pm70).